Reading from the N-terminus, the 239-residue chain is Cysteine-rich venom protein natrin-1 (239 aa).

The first 18 residues, 1–18 (MIAFSLLCFAAVLQQSFG), serve as a signal peptide directing secretion. Residues 37–165 (VDLHNSLRRR…AWSYFYVCQY (129 aa)) enclose the SCP domain. Intrachain disulfides connect Cys-74/Cys-152, Cys-91/Cys-166, Cys-147/Cys-163, Cys-185/Cys-192, Cys-188/Cys-197, Cys-201/Cys-234, Cys-210/Cys-228, and Cys-219/Cys-232. The 34-residue stretch at 201 to 234 (CTIYNKLTNCDSLLKQSSCQDDWIKSNCPASCFC) folds into the ShKT domain.

In terms of tissue distribution, expressed by the venom gland.

Its subcellular location is the secreted. Functionally, inhibits calcium-activated potassium channels (KCa1.1/KCNMA1), voltage-gated potassium channel Kv1.3/KCNA3, and the calcium release channel/ryanodine receptor (RyR). Binds specifically to type 1 RyR (RyR1) from skeletal muscle. Inhibit both the binding of ryanodine to RyR1, and RyR1's calcium-channel activity. Inhibits carbachol-induced muscle contraction and weakly blocks muscle contraction evoked by potassium. The chain is Cysteine-rich venom protein natrin-1 from Naja atra (Chinese cobra).